A 340-amino-acid chain; its full sequence is L-galactonate-5-dehydrogenase (340 aa).

Positions 40, 65, 92, 95, 98, 106, and 146 each coordinate Zn(2+).

It belongs to the zinc-containing alcohol dehydrogenase family. It depends on Zn(2+) as a cofactor.

The catalysed reaction is L-galactonate + NAD(+) = keto-D-tagaturonate + NADH + H(+). With respect to regulation, inhibited by EDTA. Catalyzes the oxidation of L-galactonate to D-tagaturonate. Required for growth on L-galactonate as the sole carbon source. In vitro, can also use L-gulonate. The polypeptide is L-galactonate-5-dehydrogenase (lgoD) (Escherichia coli (strain K12)).